Here is a 395-residue protein sequence, read N- to C-terminus: MKLAMIGFGQAGGKVVDKFVEYDRERNAGIVRAAVAVNSAKADLLGLKNIPKDQRVLIGQSRVKGHGVGADNELGAEIAEEDIDEVQGAIDSIPVHEVDAFLVVSGLGGGTGSGGAPVLAKHLKRIYTEPVYGLGILPGSDEGGIYTLNAARSFQTFVREVDNLLVFDNDAWRKTGESVQGGYDEINEEIVNRFGVLFGAGEVQDGQEVAESVVDSSEIINTLAGGGVSTVGYASEGVEPRKNNGGGLLSRLTGGDEPDDNLDTAHTTNRITSLVRKAALGRLTLPCEIEGAERALLVLAGPPEHLNRKGIERGRKWIEEQTGSMEVRGGDYPIPGAEKVAGVILLSGVTNVPRIKELQQVAIEAQDNIEEIRQESDSNLETLINDDEDELESLF.

Residues 10 to 14 (QAGGK), 110 to 112 (GTG), Glu-142, Asn-169, and Asn-187 contribute to the GTP site.

Belongs to the CetZ family.

It localises to the cytoplasm. In terms of biological role, involved in cell shape control. Essential for the development of a rod-shaped cell type required for efficient swimming. This chain is Tubulin-like protein CetZ1, found in Haloferax volcanii (strain ATCC 29605 / DSM 3757 / JCM 8879 / NBRC 14742 / NCIMB 2012 / VKM B-1768 / DS2) (Halobacterium volcanii).